The chain runs to 214 residues: Nascent polypeptide-associated complex subunit alpha (214 aa).

A disordered region spans residues 1-80 (MPGEATETVP…SEKKARKAMS (80 aa)). Over residues 29-40 (SDSDDSPPELEQ) the composition is skewed to acidic residues. Residues 41 to 56 (DSTQTTTQQAQLAAAA) are compositionally biased toward low complexity. In terms of domain architecture, NAC-A/B spans 69–134 (SRSEKKARKA…AKIEDLSQQA (66 aa)). The region spanning 175-212 (VEVKDIELVMSQANVSRAKAVRALKNNSNDIVNAIMEL) is the UBA domain.

It belongs to the NAC-alpha family.

In terms of biological role, may promote appropriate targeting of ribosome-nascent polypeptide complexes. This chain is Nascent polypeptide-associated complex subunit alpha (naca), found in Xenopus tropicalis (Western clawed frog).